Here is a 315-residue protein sequence, read N- to C-terminus: 4-hydroxy-3-methylbut-2-enyl diphosphate reductase (315 aa).

Cys12 contacts [4Fe-4S] cluster. (2E)-4-hydroxy-3-methylbut-2-enyl diphosphate is bound by residues His41 and His74. Dimethylallyl diphosphate-binding residues include His41 and His74. 2 residues coordinate isopentenyl diphosphate: His41 and His74. Residue Cys96 coordinates [4Fe-4S] cluster. His124 contacts (2E)-4-hydroxy-3-methylbut-2-enyl diphosphate. His124 serves as a coordination point for dimethylallyl diphosphate. His124 contacts isopentenyl diphosphate. The active-site Proton donor is Glu126. Residue Thr168 coordinates (2E)-4-hydroxy-3-methylbut-2-enyl diphosphate. [4Fe-4S] cluster is bound at residue Cys198. 4 residues coordinate (2E)-4-hydroxy-3-methylbut-2-enyl diphosphate: Ser226, Ser227, Asn228, and Ser270. Dimethylallyl diphosphate-binding residues include Ser226, Ser227, Asn228, and Ser270. 4 residues coordinate isopentenyl diphosphate: Ser226, Ser227, Asn228, and Ser270.

The protein belongs to the IspH family. It depends on [4Fe-4S] cluster as a cofactor.

The catalysed reaction is isopentenyl diphosphate + 2 oxidized [2Fe-2S]-[ferredoxin] + H2O = (2E)-4-hydroxy-3-methylbut-2-enyl diphosphate + 2 reduced [2Fe-2S]-[ferredoxin] + 2 H(+). It catalyses the reaction dimethylallyl diphosphate + 2 oxidized [2Fe-2S]-[ferredoxin] + H2O = (2E)-4-hydroxy-3-methylbut-2-enyl diphosphate + 2 reduced [2Fe-2S]-[ferredoxin] + 2 H(+). The protein operates within isoprenoid biosynthesis; dimethylallyl diphosphate biosynthesis; dimethylallyl diphosphate from (2E)-4-hydroxy-3-methylbutenyl diphosphate: step 1/1. It functions in the pathway isoprenoid biosynthesis; isopentenyl diphosphate biosynthesis via DXP pathway; isopentenyl diphosphate from 1-deoxy-D-xylulose 5-phosphate: step 6/6. Catalyzes the conversion of 1-hydroxy-2-methyl-2-(E)-butenyl 4-diphosphate (HMBPP) into a mixture of isopentenyl diphosphate (IPP) and dimethylallyl diphosphate (DMAPP). Acts in the terminal step of the DOXP/MEP pathway for isoprenoid precursor biosynthesis. This Pseudomonas savastanoi pv. phaseolicola (strain 1448A / Race 6) (Pseudomonas syringae pv. phaseolicola (strain 1448A / Race 6)) protein is 4-hydroxy-3-methylbut-2-enyl diphosphate reductase.